The chain runs to 496 residues: Endoglucanase (496 aa).

The first 23 residues, 1–23, serve as a signal peptide directing secretion; that stretch reads MGYHSVFIAVFLWSSMVCHNGLA. D93 acts as the Nucleophile in catalysis. Residues H415, D467, and E476 contribute to the active site.

Belongs to the glycosyl hydrolase 9 (cellulase E) family.

The enzyme catalyses Endohydrolysis of (1-&gt;4)-beta-D-glucosidic linkages in cellulose, lichenin and cereal beta-D-glucans.. Involved in ripening fruit process. This Phaseolus vulgaris (Kidney bean) protein is Endoglucanase.